We begin with the raw amino-acid sequence, 255 residues long: Large ribosomal subunit protein uL4 (255 aa).

The protein belongs to the universal ribosomal protein uL4 family. In terms of assembly, part of the 50S ribosomal subunit.

In terms of biological role, one of the primary rRNA binding proteins, this protein initially binds near the 5'-end of the 23S rRNA. It is important during the early stages of 50S assembly. It makes multiple contacts with different domains of the 23S rRNA in the assembled 50S subunit and ribosome. Functionally, forms part of the polypeptide exit tunnel. The chain is Large ribosomal subunit protein uL4 from Pyrococcus abyssi (strain GE5 / Orsay).